The primary structure comprises 508 residues: Maturase K (508 aa).

Belongs to the intron maturase 2 family. MatK subfamily.

The protein localises to the plastid. It is found in the chloroplast. Usually encoded in the trnK tRNA gene intron. Probably assists in splicing its own and other chloroplast group II introns. This chain is Maturase K, found in Ranunculus trichophyllus (Whitewater crowfoot).